An 87-amino-acid polypeptide reads, in one-letter code: Cuticle protein 1 (87 aa).

At Gln1 the chain carries Pyrrolidone carboxylic acid. 3 repeat units span residues 5-20 (YPAGLNPALCPNYPNC), 43-58 (YPAGVSPAACPNYPFC), and 71-86 (YPAGVHPAACPNYPYC). 3 disulfides stabilise this stretch: Cys14–Cys20, Cys52–Cys58, and Cys80–Cys86.

This is Cuticle protein 1 from Blaberus craniifer (Death's head cockroach).